We begin with the raw amino-acid sequence, 218 residues long: Probable transaldolase (218 aa).

Residue lysine 84 is the Schiff-base intermediate with substrate of the active site.

The protein belongs to the transaldolase family. Type 3B subfamily.

The protein localises to the cytoplasm. The enzyme catalyses D-sedoheptulose 7-phosphate + D-glyceraldehyde 3-phosphate = D-erythrose 4-phosphate + beta-D-fructose 6-phosphate. It participates in carbohydrate degradation; pentose phosphate pathway; D-glyceraldehyde 3-phosphate and beta-D-fructose 6-phosphate from D-ribose 5-phosphate and D-xylulose 5-phosphate (non-oxidative stage): step 2/3. In terms of biological role, transaldolase is important for the balance of metabolites in the pentose-phosphate pathway. The protein is Probable transaldolase of Sulfurihydrogenibium sp. (strain YO3AOP1).